A 101-amino-acid chain; its full sequence is MMLEYVLGLSAYLFSIGIYGLITSRNMVRALMCLELILNAVNINFVTFSDFFDSRQLKGNIFSIFVISIAAAEAAIGPAIVSSIYRNRKSIRINQLNLLNK.

A run of 3 helical transmembrane segments spans residues 2-22 (MLEY…YGLI), 32-52 (MCLE…SDFF), and 61-81 (IFSI…PAIV).

It belongs to the complex I subunit 4L family. As to quaternary structure, NDH is composed of at least 16 different subunits, 5 of which are encoded in the nucleus.

Its subcellular location is the plastid. It is found in the chloroplast thylakoid membrane. The catalysed reaction is a plastoquinone + NADH + (n+1) H(+)(in) = a plastoquinol + NAD(+) + n H(+)(out). It carries out the reaction a plastoquinone + NADPH + (n+1) H(+)(in) = a plastoquinol + NADP(+) + n H(+)(out). Functionally, NDH shuttles electrons from NAD(P)H:plastoquinone, via FMN and iron-sulfur (Fe-S) centers, to quinones in the photosynthetic chain and possibly in a chloroplast respiratory chain. The immediate electron acceptor for the enzyme in this species is believed to be plastoquinone. Couples the redox reaction to proton translocation, and thus conserves the redox energy in a proton gradient. This Populus trichocarpa (Western balsam poplar) protein is NAD(P)H-quinone oxidoreductase subunit 4L, chloroplastic.